A 559-amino-acid polypeptide reads, in one-letter code: Glucose-6-phosphate isomerase (559 aa).

E363 functions as the Proton donor in the catalytic mechanism. Catalysis depends on residues H394 and K523.

The protein belongs to the GPI family.

It is found in the cytoplasm. It catalyses the reaction alpha-D-glucose 6-phosphate = beta-D-fructose 6-phosphate. Its pathway is carbohydrate biosynthesis; gluconeogenesis. The protein operates within carbohydrate degradation; glycolysis; D-glyceraldehyde 3-phosphate and glycerone phosphate from D-glucose: step 2/4. Its function is as follows. Catalyzes the reversible isomerization of glucose-6-phosphate to fructose-6-phosphate. The chain is Glucose-6-phosphate isomerase from Bartonella quintana (strain Toulouse) (Rochalimaea quintana).